The following is a 478-amino-acid chain: Aspartyl/glutamyl-tRNA(Asn/Gln) amidotransferase subunit B (478 aa).

It belongs to the GatB/GatE family. GatB subfamily. In terms of assembly, heterotrimer of A, B and C subunits.

It catalyses the reaction L-glutamyl-tRNA(Gln) + L-glutamine + ATP + H2O = L-glutaminyl-tRNA(Gln) + L-glutamate + ADP + phosphate + H(+). It carries out the reaction L-aspartyl-tRNA(Asn) + L-glutamine + ATP + H2O = L-asparaginyl-tRNA(Asn) + L-glutamate + ADP + phosphate + 2 H(+). Its function is as follows. Allows the formation of correctly charged Asn-tRNA(Asn) or Gln-tRNA(Gln) through the transamidation of misacylated Asp-tRNA(Asn) or Glu-tRNA(Gln) in organisms which lack either or both of asparaginyl-tRNA or glutaminyl-tRNA synthetases. The reaction takes place in the presence of glutamine and ATP through an activated phospho-Asp-tRNA(Asn) or phospho-Glu-tRNA(Gln). This is Aspartyl/glutamyl-tRNA(Asn/Gln) amidotransferase subunit B from Syntrophotalea carbinolica (strain DSM 2380 / NBRC 103641 / GraBd1) (Pelobacter carbinolicus).